We begin with the raw amino-acid sequence, 501 residues long: Ribose import ATP-binding protein RbsA (501 aa).

ABC transporter domains follow at residues 5–241 (LQLK…VGRK) and 252–495 (APGD…VGKL). 37–44 (GENGAGKS) is an ATP binding site.

The protein belongs to the ABC transporter superfamily. Ribose importer (TC 3.A.1.2.1) family. In terms of assembly, the complex is composed of an ATP-binding protein (RbsA), two transmembrane proteins (RbsC) and a solute-binding protein (RbsB).

The protein localises to the cell inner membrane. It carries out the reaction D-ribose(out) + ATP + H2O = D-ribose(in) + ADP + phosphate + H(+). Its function is as follows. Part of the ABC transporter complex RbsABC involved in ribose import. Responsible for energy coupling to the transport system. This Escherichia coli (strain K12) protein is Ribose import ATP-binding protein RbsA.